A 538-amino-acid chain; its full sequence is Putative cysteine ligase BshC (538 aa).

Positions 248–268 (ISKYKEVQEGLRNQQEVIKEL) form a coiled coil.

Belongs to the BshC family.

Functionally, involved in bacillithiol (BSH) biosynthesis. May catalyze the last step of the pathway, the addition of cysteine to glucosamine malate (GlcN-Mal) to generate BSH. This chain is Putative cysteine ligase BshC, found in Bacillus cereus (strain G9842).